Consider the following 538-residue polypeptide: uncharacterized protein (538 aa).

Disordered regions lie at residues 20-71, 151-211, 288-331, and 458-482; these read RLSA…GGAQ, LWAE…EHPK, MLQP…QQHK, and EFEKASKLTGPGEASSGVGHSLKNY. Over residues 154–171 the composition is skewed to basic and acidic residues; the sequence is ESEKSESKGTRRDFRSYD.

This is an uncharacterized protein from Homo sapiens (Human).